Here is a 139-residue protein sequence, read N- to C-terminus: ATP synthase epsilon chain (139 aa).

Belongs to the ATPase epsilon chain family. As to quaternary structure, F-type ATPases have 2 components, CF(1) - the catalytic core - and CF(0) - the membrane proton channel. CF(1) has five subunits: alpha(3), beta(3), gamma(1), delta(1), epsilon(1). CF(0) has three main subunits: a, b and c.

The protein localises to the cell inner membrane. In terms of biological role, produces ATP from ADP in the presence of a proton gradient across the membrane. The polypeptide is ATP synthase epsilon chain (Pseudomonas putida (strain ATCC 47054 / DSM 6125 / CFBP 8728 / NCIMB 11950 / KT2440)).